Here is a 287-residue protein sequence, read N- to C-terminus: Festuclavine synthase I (287 aa).

This sequence belongs to the fgaFS/easG family.

The enzyme catalyses festuclavine + NAD(+) = 6,8-dimethyl-6,7-didehydroergoline + NADH + H(+). Its pathway is alkaloid biosynthesis; ergot alkaloid biosynthesis. Its function is as follows. Festuclavine synthase; part of the gene cluster that mediates the biosynthesis of isofumigaclavines, fungal ergot alkaloids. The tryptophan dimethylallyltransferase ifgA catalyzes the first step of ergot alkaloid biosynthesis by condensing dimethylallyl diphosphate (DMAP) and tryptophan to form 4-dimethylallyl-L-tryptophan. The second step is catalyzed by the methyltransferase ifgB that methylates 4-dimethylallyl-L-tryptophan in the presence of S-adenosyl-L-methionine, resulting in the formation of N-methyl-dimethylallyl-L-tryptophan. The catalase ifgD and the FAD-dependent oxidoreductase ifgC then transform N-methyl-dimethylallyl-L-tryptophan to chanoclavine-I which is further oxidized by ifgE in the presence of NAD(+), resulting in the formation of chanoclavine-I aldehyde. The chanoclavine-I aldehyde reductases ifgG and/or fgaOx3 reduce chanoclavine-I aldehyde to dihydrochanoclavine-I aldehyde that spontaneously dehydrates to form 6,8-dimethyl-6,7-didehydroergoline. The festuclavine dehydrogenases ifgF1 and/or ifgF2 then catalyze the reduction of 6,8-dimethyl-6,7-didehydroergoline to form festuclavine. Hydrolysis of festuclavine by a yet undetermined cytochrome P450 monooxygenase (called ifgH) then leads to the formation of isofumigaclavine B which is in turn acetylated by ifgI to isofumigaclavine A. Penicillium roqueforti has interestingly at least two sets of genes for the consumption of chanoclavine-I aldehyde on three different loci, the OYEs ifgG/fgaOx3 and the festuclavine synthase homologs ifgF1/ifgF2. The reason for the duplication of these genes is unclear, probably to ensure the conversion of chanoclavine-I aldehyde by differential gene expression under various environmental conditions. This chain is Festuclavine synthase I, found in Penicillium roqueforti (strain FM164).